The chain runs to 226 residues: Urease accessory protein UreF (226 aa).

It belongs to the UreF family. As to quaternary structure, ureD, UreF and UreG form a complex that acts as a GTP-hydrolysis-dependent molecular chaperone, activating the urease apoprotein by helping to assemble the nickel containing metallocenter of UreC. The UreE protein probably delivers the nickel.

Its subcellular location is the cytoplasm. Its function is as follows. Required for maturation of urease via the functional incorporation of the urease nickel metallocenter. The polypeptide is Urease accessory protein UreF (Paraburkholderia phymatum (strain DSM 17167 / CIP 108236 / LMG 21445 / STM815) (Burkholderia phymatum)).